The following is a 524-amino-acid chain: MTVPTDTVSRRLQSLAWSDIKQHAPWLPSSRTLVSGFLCLILLQILYSRGRKSDLRVYNPKKWWELTTMRAKREFDANAPAWIEAWFSKNDQPLRFIVDSGYCTILPSSMADEFRKMKELCMYKFLGTDFHSHLPGFDGFKEVTRDAHLITKVVMNQFQTQAAKYTKPLADEASATIADIFGDNKEWHTAPVYNECLDLVTRTVTFIMVGDKLAHNEEWLDIAKHHAVTMAIQARQLRLWPVILRPIVHWLEPQGAKLRAQVRRARQLLEPIIQERRAEKAKCLAQGIEPPRYVDSIQWFEDTAKGQWYDAAGAQLAMDFAGIYGTSDLMIGGLVDIVRHPHLIEPLRNEIRTVIGEEGWTPASLYKLKLLDSCLKESQRVKPVECATMRSYALQNVTFSNGTFVPKGELVAVAADRMSNPEVWPEPKKYDPYRYMRLREDPDKAFSAQLENTNGNHIGFGWHPRACPGRFFASKEIKIMLAFLLIRYDWKLVPNEPLQYYRHSFSVRIHPATKLMMRRRDEDL.

Residues 1–25 (MTVPTDTVSRRLQSLAWSDIKQHAP) are Cytoplasmic-facing. A helical; Signal-anchor for type II membrane protein membrane pass occupies residues 26 to 47 (WLPSSRTLVSGFLCLILLQILY). The Lumenal portion of the chain corresponds to 48 to 524 (SRGRKSDLRV…LMMRRRDEDL (477 aa)). N-linked (GlcNAc...) asparagine glycosylation is found at asparagine 396 and asparagine 401. Cysteine 467 lines the heme pocket.

This sequence belongs to the cytochrome P450 family. It depends on heme as a cofactor.

The protein localises to the endoplasmic reticulum membrane. The enzyme catalyses dihydromonacolin L carboxylate + reduced [NADPH--hemoprotein reductase] + O2 = monacolin L carboxylate + oxidized [NADPH--hemoprotein reductase] + 2 H2O + H(+). It carries out the reaction monacolin L carboxylate + reduced [NADPH--hemoprotein reductase] + O2 = monacolin J carboxylate + oxidized [NADPH--hemoprotein reductase] + H2O + H(+). It participates in polyketide biosynthesis; lovastatin biosynthesis. Its function is as follows. Cytochrome P450 monooxygenase; part of the gene cluster that mediates the biosynthesis of monakolin K, also known as lovastatin, and which acts as a potent competitive inhibitor of HMG-CoA reductase. Monakolin K biosynthesis is performed in two stages. The first stage is catalyzed by the nonaketide synthase mokA, which belongs to type I polyketide synthases and catalyzes the iterative nine-step formation of the polyketide. This PKS stage is completed by the action of dehydrogenase mokE, which catalyzes the NADPH-dependent reduction of the unsaturated tetra-, penta- and heptaketide intermediates that arise during the mokA-mediated biosynthesis of the nonaketide chain and leads to dihydromonacolin L. Covalently bound dihydromonacolin L is released from mokA by the mokD esterase. Conversion of dihydromonacolin L into monacolin L and then monacolin J is subsequently performed with the participation of molecular oxygen and P450 monoogygenase mokC. Finally, mokF performs the conversion of monacoline J to monacoline K through the addition of the side-chain diketide moiety (2R)-2-methylbutanoate produced by the diketide synthase mokB. The chain is Dihydromonacolin L monooxygenase mokC from Monascus pilosus (Red mold).